The following is a 545-amino-acid chain: ATP synthase subunit alpha (545 aa).

Residue 173–180 (GDRQTGKT) coordinates ATP.

The protein belongs to the ATPase alpha/beta chains family. In terms of assembly, F-type ATPases have 2 components, CF(1) - the catalytic core - and CF(0) - the membrane proton channel. CF(1) has five subunits: alpha(3), beta(3), gamma(1), delta(1), epsilon(1). CF(0) has three main subunits: a(1), b(2) and c(9-12). The alpha and beta chains form an alternating ring which encloses part of the gamma chain. CF(1) is attached to CF(0) by a central stalk formed by the gamma and epsilon chains, while a peripheral stalk is formed by the delta and b chains.

The protein localises to the cell membrane. It carries out the reaction ATP + H2O + 4 H(+)(in) = ADP + phosphate + 5 H(+)(out). Functionally, produces ATP from ADP in the presence of a proton gradient across the membrane. The alpha chain is a regulatory subunit. The sequence is that of ATP synthase subunit alpha from Paenarthrobacter aurescens (strain TC1).